The primary structure comprises 206 residues: MGRTLVLIRHGQSEWNIKNLFTGWKDPGLTEKGHAEAITAGKNLKAAGLKFDIAYTSALQRAQKTAQHILEQMGQSDLPLIKNSALNERDYGDLSGLNKDEVRQQWGEQQVQIWRRSYAVAPPNGESLRDTGARVWPYYLYHIQPHILRSQTVLIAAHGNSLRALIMALEGLNSEEIISQELTTGIPLIYTFNSDSTISSKTIITP.

Residues 9 to 16 (RHGQSEWN), 22 to 23 (TG), R61, 88 to 91 (ERDY), K99, 115 to 116 (RR), and 159 to 160 (GN) each bind substrate. The active-site Tele-phosphohistidine intermediate is H10. The active-site Proton donor/acceptor is E88.

It belongs to the phosphoglycerate mutase family. BPG-dependent PGAM subfamily. As to quaternary structure, homodimer.

It catalyses the reaction (2R)-2-phosphoglycerate = (2R)-3-phosphoglycerate. Its pathway is carbohydrate degradation; glycolysis; pyruvate from D-glyceraldehyde 3-phosphate: step 3/5. In terms of biological role, catalyzes the interconversion of 2-phosphoglycerate and 3-phosphoglycerate. The protein is 2,3-bisphosphoglycerate-dependent phosphoglycerate mutase of Bartonella quintana (strain Toulouse) (Rochalimaea quintana).